The chain runs to 259 residues: 5'-nucleotidase SurE (259 aa).

Residues D8, D9, S40, and N92 each contribute to the a divalent metal cation site.

It belongs to the SurE nucleotidase family. The cofactor is a divalent metal cation.

Its subcellular location is the cytoplasm. It carries out the reaction a ribonucleoside 5'-phosphate + H2O = a ribonucleoside + phosphate. In terms of biological role, nucleotidase that shows phosphatase activity on nucleoside 5'-monophosphates. In Xanthomonas oryzae pv. oryzae (strain MAFF 311018), this protein is 5'-nucleotidase SurE.